The following is a 284-amino-acid chain: UPF0761 membrane protein IL2447 (284 aa).

A run of 6 helical transmembrane segments spans residues 41–61, 98–118, 137–157, 178–198, 214–234, and 247–267; these read MLSL…FPMF, MTAI…SAID, FAVY…GLAA, FVLW…MYQL, VIAA…ITFF, and IPIL…GAVL.

It belongs to the UPF0761 family.

The protein localises to the cell inner membrane. In Idiomarina loihiensis (strain ATCC BAA-735 / DSM 15497 / L2-TR), this protein is UPF0761 membrane protein IL2447.